Reading from the N-terminus, the 453-residue chain is Ribosomal protein uS12 methylthiotransferase RimO (453 aa).

The region spanning 4-120 (TSVHIVSLGC…IADHLRVLME (117 aa)) is the MTTase N-terminal domain. Residues cysteine 13, cysteine 49, cysteine 83, cysteine 161, cysteine 165, and cysteine 168 each coordinate [4Fe-4S] cluster. The 231-residue stretch at 147–377 (STPPYSAYLK…MEEQAVISHE (231 aa)) folds into the Radical SAM core domain. The TRAM domain maps to 380–450 (QTLVGSLQEV…DYDLFAEVIS (71 aa)).

The protein belongs to the methylthiotransferase family. RimO subfamily. The cofactor is [4Fe-4S] cluster.

It localises to the cytoplasm. The enzyme catalyses L-aspartate(89)-[ribosomal protein uS12]-hydrogen + (sulfur carrier)-SH + AH2 + 2 S-adenosyl-L-methionine = 3-methylsulfanyl-L-aspartate(89)-[ribosomal protein uS12]-hydrogen + (sulfur carrier)-H + 5'-deoxyadenosine + L-methionine + A + S-adenosyl-L-homocysteine + 2 H(+). Functionally, catalyzes the methylthiolation of an aspartic acid residue of ribosomal protein uS12. This chain is Ribosomal protein uS12 methylthiotransferase RimO, found in Syntrophus aciditrophicus (strain SB).